A 257-amino-acid chain; its full sequence is THAP domain-containing protein 10 (257 aa).

The THAP-type zinc finger occupies 1-90 (MPARCVAAHC…LVAGAVPTLH (90 aa)). Residues 154–168 (QPHADNPSNTVTSVP) show a composition bias toward polar residues. The segment at 154–178 (QPHADNPSNTVTSVPTHCEEGPVHK) is disordered.

This chain is THAP domain-containing protein 10 (THAP10), found in Homo sapiens (Human).